The primary structure comprises 393 residues: Acetylornithine aminotransferase (393 aa).

Residues 105-106 (GA) and F138 each bind pyridoxal 5'-phosphate. N(2)-acetyl-L-ornithine is bound at residue R141. 224-227 (DEVQ) contacts pyridoxal 5'-phosphate. K253 carries the N6-(pyridoxal phosphate)lysine modification. N(2)-acetyl-L-ornithine is bound at residue S281. T282 is a binding site for pyridoxal 5'-phosphate.

This sequence belongs to the class-III pyridoxal-phosphate-dependent aminotransferase family. ArgD subfamily. Homodimer. It depends on pyridoxal 5'-phosphate as a cofactor.

It is found in the cytoplasm. It catalyses the reaction N(2)-acetyl-L-ornithine + 2-oxoglutarate = N-acetyl-L-glutamate 5-semialdehyde + L-glutamate. It functions in the pathway amino-acid biosynthesis; L-arginine biosynthesis; N(2)-acetyl-L-ornithine from L-glutamate: step 4/4. This is Acetylornithine aminotransferase from Haemophilus ducreyi (strain 35000HP / ATCC 700724).